A 737-amino-acid polypeptide reads, in one-letter code: Procollagen-lysine,2-oxoglutarate 5-dioxygenase 2 (737 aa).

The first 25 residues, 1-25, serve as a signal peptide directing secretion; the sequence is MGDRGARPGRLMPMLALLSWAAGLG. N-linked (GlcNAc...) asparagine glycans are attached at residues Asn63 and Asn209. Thr320 carries the post-translational modification Phosphothreonine. The residue at position 323 (Tyr323) is a Phosphotyrosine. N-linked (GlcNAc...) asparagine glycans are attached at residues Asn365 and Asn522. In terms of domain architecture, Fe2OG dioxygenase spans 644–737; it reads KGFALLNFVV…RYIAVSFIDP (94 aa). His666 and Asp668 together coordinate Fe cation. Asn696 carries an N-linked (GlcNAc...) asparagine glycan. At Lys704 the chain carries N6-succinyllysine. Fe cation is bound at residue His718. A glycan (N-linked (GlcNAc...) asparagine) is linked at Asn725. Arg728 is an active-site residue.

In terms of assembly, homodimer. The cofactor is Fe(2+). L-ascorbate serves as cofactor. Is highly expressed in the heart, lung, kidney, eye, ovary and placenta.

It is found in the rough endoplasmic reticulum membrane. It catalyses the reaction L-lysyl-[collagen] + 2-oxoglutarate + O2 = (5R)-5-hydroxy-L-lysyl-[collagen] + succinate + CO2. Forms hydroxylysine residues in -Xaa-Lys-Gly- sequences in collagens. These hydroxylysines serve as sites of attachment for carbohydrate units and are essential for the stability of the intermolecular collagen cross-links. This is Procollagen-lysine,2-oxoglutarate 5-dioxygenase 2 (Plod2) from Mus musculus (Mouse).